The sequence spans 542 residues: MELSYQALRVASQNREAEELRTEARRKNLLILIMHYLLQEGYMDSANSLEQETKISLRRFDVCDNVDLETILMEYESYYYIKFQKYPKITKKALDHDSRVQSKPRSAGKLRRAGSNSTQGLPRIAQQTVLHRPVSGSYFRTHAHQKALSRENSKQENGGNSPREASEIGLNVSAISKTSGEGGQTRRRQVIDFRSMIQDTIKGASQEIALNSLNCNPDPSERLIKPVGAFIGGNSEMRELAAVISRDIYLQNPNVRWDDIIGLDAAKRLVKEAVVYPIRYPQLFTGILSPWKGLLLYGPPGTGKTLLAKAVATECNTTFFNISASTIVSKWRGDSEKLVRVLFELARYHAPSTIFLDELESVMSQRGTGPGGEHEGSRRMKTELLVQMDGLARSDDLVFVLAASNLPWELDYAMLRRLEKRILVDLPSKEARQAMIQHWLPPVSNSSGVELRTDLDYSTLGAETDGYSGSDIRLVCKEAAMRPVRKIFDALENHHSEHKNLPVISLDTVTTSDFLEVLAHTKPSAKSLAEKYAAWQKEFESV.

Positions 25 to 57 (RRKNLLILIMHYLLQEGYMDSANSLEQETKISL) constitute a LisH domain. 2 disordered regions span residues 94-126 (LDHD…RIAQ) and 142-168 (HAHQ…ASEI). Over residues 114–126 (GSNSTQGLPRIAQ) the composition is skewed to polar residues. 298–305 (GPPGTGKT) is a binding site for ATP.

The protein belongs to the AAA ATPase family. Katanin p60 subunit A1 subfamily. A-like 2 sub-subfamily.

The protein resides in the cytoplasm. The protein localises to the cytoskeleton. It is found in the spindle. Its subcellular location is the spindle pole. It catalyses the reaction n ATP + n H2O + a microtubule = n ADP + n phosphate + (n+1) alpha/beta tubulin heterodimers.. Its function is as follows. Severs microtubules in vitro in an ATP-dependent manner. This activity may promote rapid reorganization of cellular microtubule arrays. This chain is Katanin p60 ATPase-containing subunit A-like 2 (katnal2), found in Xenopus tropicalis (Western clawed frog).